The chain runs to 573 residues: Sulfite reductase [NADPH] hemoprotein beta-component (573 aa).

Residues 1-20 (MAKVELKAPDGPPSDVERIK) are disordered. C438, C444, C483, and C487 together coordinate [4Fe-4S] cluster. Siroheme is bound at residue C487.

Belongs to the nitrite and sulfite reductase 4Fe-4S domain family. In terms of assembly, alpha(8)-beta(8). The alpha component is a flavoprotein, the beta component is a hemoprotein. Requires siroheme as cofactor. The cofactor is [4Fe-4S] cluster.

The enzyme catalyses hydrogen sulfide + 3 NADP(+) + 3 H2O = sulfite + 3 NADPH + 4 H(+). Its pathway is sulfur metabolism; hydrogen sulfide biosynthesis; hydrogen sulfide from sulfite (NADPH route): step 1/1. Component of the sulfite reductase complex that catalyzes the 6-electron reduction of sulfite to sulfide. This is one of several activities required for the biosynthesis of L-cysteine from sulfate. The protein is Sulfite reductase [NADPH] hemoprotein beta-component of Geobacillus kaustophilus (strain HTA426).